Reading from the N-terminus, the 38-residue chain is Non-specific lipid-transfer protein P2 (38 aa).

It belongs to the plant LTP family.

It is found in the secreted. Functionally, plant non-specific lipid-transfer proteins transfer phospholipids as well as galactolipids across membranes. May play a role in wax or cutin deposition in the cell walls of expanding epidermal cells and certain secretory tissues. This chain is Non-specific lipid-transfer protein P2, found in Vitis sp. (Grape).